Reading from the N-terminus, the 443-residue chain is Methionine aminopeptidase 2-1 (443 aa).

Residues 1–90 (MAAQADDELN…RVPVSELFPN (90 aa)) form a disordered region. Residues 33 to 48 (ADNDDSEDDEKEEEGG) show a composition bias toward acidic residues. Basic residues predominate over residues 58–73 (KKKKKRKPKKKKKGGA). Residue His196 participates in substrate binding. Positions 216, 227, and 296 each coordinate a divalent metal cation. His304 contacts substrate. A divalent metal cation-binding residues include Glu329 and Glu424.

It belongs to the peptidase M24A family. Methionine aminopeptidase eukaryotic type 2 subfamily. Co(2+) is required as a cofactor. The cofactor is Zn(2+). It depends on Mn(2+) as a cofactor. Fe(2+) serves as cofactor.

It localises to the cytoplasm. The enzyme catalyses Release of N-terminal amino acids, preferentially methionine, from peptides and arylamides.. Cotranslationally removes the N-terminal methionine from nascent proteins. The N-terminal methionine is often cleaved when the second residue in the primary sequence is small and uncharged (Met-Ala-, Cys, Gly, Pro, Ser, Thr, or Val). In Talaromyces stipitatus (strain ATCC 10500 / CBS 375.48 / QM 6759 / NRRL 1006) (Penicillium stipitatum), this protein is Methionine aminopeptidase 2-1.